Here is a 221-residue protein sequence, read N- to C-terminus: uncharacterized protein (221 aa).

The tract at residues 40–162 is disordered; the sequence is TIEVEPSPVQ…EPPEKVELSP (123 aa). A compositionally biased stretch (polar residues) spans 47–60; it reads PVQQDNPPISSEQA. Low complexity predominate over residues 82–92; it reads SSAQQEATAQT.

This is an uncharacterized protein from Homo sapiens (Human).